A 493-amino-acid polypeptide reads, in one-letter code: Endoglucanase 23 (493 aa).

The N-terminal stretch at 1–23 (MKASIYLVTVFILLLLLLPTAIP) is a signal peptide. Residue Asp-78 is the Nucleophile of the active site. Asn-297 carries N-linked (GlcNAc...) asparagine glycosylation. Residue His-410 is part of the active site. Residue Asn-465 is glycosylated (N-linked (GlcNAc...) asparagine). Residue Glu-470 is part of the active site.

Belongs to the glycosyl hydrolase 9 (cellulase E) family.

It is found in the secreted. It catalyses the reaction Endohydrolysis of (1-&gt;4)-beta-D-glucosidic linkages in cellulose, lichenin and cereal beta-D-glucans.. This chain is Endoglucanase 23, found in Arabidopsis thaliana (Mouse-ear cress).